The chain runs to 281 residues: Biotin synthase (281 aa).

Positions 1–230 (MNQKIFLCSI…AQRIMVAGGR (230 aa)) constitute a Radical SAM core domain. Positions 18, 22, and 25 each coordinate [4Fe-4S] cluster. The [2Fe-2S] cluster site is built by Cys62, Cys97, and Arg223.

This sequence belongs to the radical SAM superfamily. Biotin synthase family. Homodimer. The cofactor is [4Fe-4S] cluster. It depends on [2Fe-2S] cluster as a cofactor.

The catalysed reaction is (4R,5S)-dethiobiotin + (sulfur carrier)-SH + 2 reduced [2Fe-2S]-[ferredoxin] + 2 S-adenosyl-L-methionine = (sulfur carrier)-H + biotin + 2 5'-deoxyadenosine + 2 L-methionine + 2 oxidized [2Fe-2S]-[ferredoxin]. It participates in cofactor biosynthesis; biotin biosynthesis; biotin from 7,8-diaminononanoate: step 2/2. Functionally, catalyzes the conversion of dethiobiotin (DTB) to biotin by the insertion of a sulfur atom into dethiobiotin via a radical-based mechanism. The polypeptide is Biotin synthase (Sulfurimonas denitrificans (strain ATCC 33889 / DSM 1251) (Thiomicrospira denitrificans (strain ATCC 33889 / DSM 1251))).